Here is a 246-residue protein sequence, read N- to C-terminus: Uridylate kinase (246 aa).

ATP is bound at residue 18 to 21 (KVSG). Gly-60 serves as a coordination point for UMP. 2 residues coordinate ATP: Gly-61 and Arg-65. Residues Asp-80 and 141 to 148 (TGNPFFTT) contribute to the UMP site. ATP is bound by residues Thr-168, Gln-169, Tyr-174, and Asp-177.

It belongs to the UMP kinase family. In terms of assembly, homohexamer.

It localises to the cytoplasm. It carries out the reaction UMP + ATP = UDP + ADP. Its pathway is pyrimidine metabolism; CTP biosynthesis via de novo pathway; UDP from UMP (UMPK route): step 1/1. Its activity is regulated as follows. Inhibited by UTP. Functionally, catalyzes the reversible phosphorylation of UMP to UDP. This chain is Uridylate kinase, found in Granulibacter bethesdensis (strain ATCC BAA-1260 / CGDNIH1).